A 439-amino-acid polypeptide reads, in one-letter code: Packaging protein 1 (439 aa).

Positions 1–23 (MSTQIPARQETYDPSQSSGTKTP) are enriched in polar residues. The segment at 1–42 (MSTQIPARQETYDPSQSSGTKTPSHPYDGNPTRSYPKRNAGK) is disordered. 151–158 (GPTGSGKS) contributes to the ATP binding site. The tract at residues 419 to 439 (ERNPKLTDLEKLSPPGTFQET) is DNA-binding.

It belongs to the adenoviridae packaging protein 1 family. In terms of assembly, homodimer. Part of a genome packaging complex composed of packaging proteins 1, 2 and 3; this complex specifically binds to the packaging sequence on the left end of viral genomic DNA and performs packaging of the viral genome. Interacts with protein 33K.

It localises to the virion. Its subcellular location is the host nucleus. It is found in the host nucleoplasm. The protein localises to the host nucleolus. In terms of biological role, component of the packaging machinery which encapsidates the viral DNA into preformed capsids and transcriptional activator of the viral major late promoter (MLP). Binds, along with packaging proteins 2 and 3, to the specific packaging sequence on the left end of viral genomic DNA and displays ATPase activity thereby providing the power stroke of the packaging machinery. The activity of packaging protein IVa2 is stimulated by protein 33K which acts as a terminase. May be the protein that pumps DNA into the capsid powered by ATP hydrolysis. Specifically binds to the 5'-CG-3' nucleotides of the repeats making up the packaging sequence. Component of the DEF-A and DEF-B transcription factors that bind downstream elements of the major late promoter (MLP), and stimulate transcription from the MLP after initiation of viral DNA replication. DEF-A is a heterodimer packaging proteins 1 and 2 and DEF-B is a homodimer of packaging protein 1. The chain is Packaging protein 1 from Fowl adenovirus A serotype 1 (strain CELO / Phelps) (FAdV-1).